The primary structure comprises 519 residues: Maltose/maltodextrin transport system permease protein MalF (519 aa).

The Cytoplasmic portion of the chain corresponds to 1–18; that stretch reads MRKNPMDVIKKKHWWQSD. Residues 19 to 41 form a helical membrane-spanning segment; it reads ALKWSVLGLLGLLVGYLVVLMYA. Residues 42 to 44 lie on the Periplasmic side of the membrane; that stretch reads QGE. The helical transmembrane segment at 45-62 threads the bilayer; sequence YLFAITTLILSSAGLYIF. Topologically, residues 63-74 are cytoplasmic; sequence ANRKAYAWRYVY. Residues 75–97 traverse the membrane as a helical segment; sequence PGMAGMGLFVLFPLVCTIAIAFT. Over 98–288 the chain is Periplasmic; the sequence is NYSSTNQLTF…QKPFLAIFVW (191 aa). An ABC transmembrane type-1 domain is found at 286–510; it reads FVWTVVFSLI…LLVGALAIVN (225 aa). A helical transmembrane segment spans residues 289–311; that stretch reads TVVFSLITVFLTVAVGMVLACLV. Topologically, residues 312–323 are cytoplasmic; sequence QWEALRGKAVYR. Residues 324–346 form a helical membrane-spanning segment; the sequence is VLLILPYAVPSFISILIFKGLFN. The Periplasmic portion of the chain corresponds to 347-374; the sequence is QSFGEINMMLSALFGVKPAWFSDPTTAR. A helical transmembrane segment spans residues 375–397; that stretch reads TMLIIVNTWLGYPYMMILCMGLL. Residues 398–417 lie on the Cytoplasmic side of the membrane; the sequence is KAIPDDLYEASAMDGAGPFQ. The chain crosses the membrane as a helical span at residues 418–440; sequence NFFKITLPLLIKPLTPLMIASFA. The Periplasmic portion of the chain corresponds to 441-488; that stretch reads FNFNNFVLIQLLTNGGPDRLGTTTPAGYTDLLVNYTYRIAFEGGGGQD. A helical membrane pass occupies residues 489 to 511; the sequence is FGLAAAIATLIFLLVGALAIVNL. The Cytoplasmic portion of the chain corresponds to 512-519; the sequence is KATRMKFD.

Belongs to the binding-protein-dependent transport system permease family. MalFG subfamily. The complex is composed of two ATP-binding proteins (MalK), two transmembrane proteins (MalG and MalF) and a solute-binding protein (MalE).

It localises to the cell inner membrane. In terms of biological role, part of the ABC transporter complex MalEFGK involved in maltose/maltodextrin import. Probably responsible for the translocation of the substrate across the membrane. The protein is Maltose/maltodextrin transport system permease protein MalF (malF) of Escherichia coli O6:H1 (strain CFT073 / ATCC 700928 / UPEC).